Consider the following 470-residue polypeptide: Syncoilin (470 aa).

The tract at residues 1–43 is disordered; it reads MASPEPLRGGDGARASREPHTEASFPLQESESPKEAKTFNPEA. Residues 1–148 form a head region; it reads MASPEPLRGG…TEGSLPAQPI (148 aa). Phosphoserine is present on serine 32. The IF rod domain maps to 157–452; it reads SVEDLERLEA…AMLPKSLEQA (296 aa). The segment at 158 to 192 is coil 1A; that stretch reads VEDLERLEARFQQCVQAVSQLEEERDQLIHELVLL. Residues 193 to 219 form a linker 1 region; the sequence is REPALQEVQQVHQDILAAYKLHAQAEL. The tract at residues 220 to 297 is coil 1b; sequence ERDGLREEIR…KEQLQQQLEA (78 aa). Residues 298-337 are linker 2; the sequence is PPTQSDGHFLQESRRLSTQFENLMAESRQGLEEEYEPQLL. A Phosphoserine modification is found at serine 314. The coil 2 stretch occupies residues 338–445; that stretch reads RLLERKEAGT…EELSTYKAML (108 aa). Positions 446–470 are disordered; the sequence is PKSLEQADAPTSQAGGVEAQSPGTV. The interval 446–470 is tail; that stretch reads PKSLEQADAPTSQAGGVEAQSPGTV.

This sequence belongs to the intermediate filament family. As to quaternary structure, may link the dystrophin-associated glycoprotein complex (DAPC) to intracellular desmin (DES) filaments. Interacts with DES and DTNA. In terms of tissue distribution, detected strongly in skeletal muscle and heart and weakly in lung (at protein level). Highly expressed in skeletal muscle and lung and weakly in lung and testis.

Its subcellular location is the cytoplasm. The protein resides in the perinuclear region. Its function is as follows. Atypical type III intermediate filament (IF) protein that may play a supportive role in the efficient coupling of mechanical stress between the myofibril and fiber exterior. May facilitate lateral force transmission during skeletal muscle contraction. Does not form homofilaments nor heterofilaments with other IF proteins. The sequence is that of Syncoilin (Sync) from Mus musculus (Mouse).